The primary structure comprises 157 residues: Transcriptional repressor NrdR (157 aa).

Residues 1-21 (MRCPYCSSEDSQVKDSRPAED) form a disordered region. Residues 3–34 (CPYCSSEDSQVKDSRPAEDGNAIRRRRICPDC) fold into a zinc finger. The segment covering 11 to 21 (SQVKDSRPAED) has biased composition (basic and acidic residues). One can recognise an ATP-cone domain in the interval 49 to 139 (LMIIKKTGRK…VYRDFSHAED (91 aa)).

The protein belongs to the NrdR family. Zn(2+) serves as cofactor.

Functionally, negatively regulates transcription of bacterial ribonucleotide reductase nrd genes and operons by binding to NrdR-boxes. The sequence is that of Transcriptional repressor NrdR from Sinorhizobium fredii (strain NBRC 101917 / NGR234).